A 206-amino-acid chain; its full sequence is Guanylate kinase (206 aa).

In terms of domain architecture, Guanylate kinase-like spans 6–185 (GAILVLSGPS…AAKTLRIIAD (180 aa)). An ATP-binding site is contributed by 13 to 20 (GPSGAGKS).

It belongs to the guanylate kinase family.

It is found in the cytoplasm. It carries out the reaction GMP + ATP = GDP + ADP. In terms of biological role, essential for recycling GMP and indirectly, cGMP. This chain is Guanylate kinase, found in Sulfurimonas denitrificans (strain ATCC 33889 / DSM 1251) (Thiomicrospira denitrificans (strain ATCC 33889 / DSM 1251)).